A 356-amino-acid polypeptide reads, in one-letter code: MSIILSLETSCDESAAALVSNEKGKIDLLANEIASQIDEHANWGGVVPEIASRRHLENLPFLIEEVFAKSTLQIKDIDAVAATVTPGLAGSLLVGSITARTLANLHQIPFLGIHHLEGHLSSIYLSENHPKPPFLVLLVSGGHTELIKVDVKHKYQRLGRSHDDAAGEAFDKVARLLGLSYPGGPAIQKIAKSGDPKKFLFPKGRVSKPEGGFYPYDFSFSGLKTAVFRQIEKIRSENKKLPIEDIAASFEYIVAEVLVERSFKCALDQGLNSLVLVGGVAANVRLREMMLAKASKNSIDITLAPMEFCTDNAAMIGAAALLRLSSEGFKSSMELGVSARWPLEKSDSLYDPIPPF.

His-115 and His-119 together coordinate Fe cation. Residues 138–142, Asp-171, Gly-184, and Asn-283 contribute to the substrate site; that span reads LVSGG. Asp-311 is a Fe cation binding site.

It belongs to the KAE1 / TsaD family. Requires Fe(2+) as cofactor.

It is found in the cytoplasm. The enzyme catalyses L-threonylcarbamoyladenylate + adenosine(37) in tRNA = N(6)-L-threonylcarbamoyladenosine(37) in tRNA + AMP + H(+). Required for the formation of a threonylcarbamoyl group on adenosine at position 37 (t(6)A37) in tRNAs that read codons beginning with adenine. Is involved in the transfer of the threonylcarbamoyl moiety of threonylcarbamoyl-AMP (TC-AMP) to the N6 group of A37, together with TsaE and TsaB. TsaD likely plays a direct catalytic role in this reaction. The polypeptide is tRNA N6-adenosine threonylcarbamoyltransferase (Prochlorococcus marinus (strain NATL1A)).